Here is a 594-residue protein sequence, read N- to C-terminus: MALKLFLFALLLCLPTSLSSTASKGKEKKSKFNPYRYTFIDKASTFSSSSSSSFSSNGQDSSYDYIVIGGGTAGCPLAATLSQNFSVLVLERGGVPFTNANVSFLRNFHIGLADISASSASQAFVSTDGVYNARARVLGGGSCINAGFYSRADAAFVKRAGWDPKLVKESYPWVEREIVHQPKLTLWQKALRDSLLEVGVRPFNGFTYDHVSGTKIGGTIFDRFGRRHTAAELLAYANPQKLRVLIYATVQKIVFDTSGTRPRVTGVIFKDEKGNQHQALLSNRKGSEVILSSGAIGSPQMLMLSGIGPKKELQRLKIPVVLENEHVGKGMADNPMNTILVPSKAPIEQSLIQTVGITKMGVYVEASTGFGQSPESIHTHYGIMSNKNELFSTIPAKQRRPEATQAYITRNKYQLHEAFNGSFILEKLAYPISRGHLSLVNTNVDDNPSVTFNYFKHPVDLQRCVEAIRLVSKVVTSNRFLNYTQCDKQNVHKMLSLSVKANINLRPKQLNDTKSMAQFCKDTVVTIWHYHGGCLVGKVVSPNRKVLGVDRLRVIDGSTFDESPGTNPQATMMMMGRYMGVKILRERLGNKAGV.

An N-terminal signal peptide occupies residues 1-19 (MALKLFLFALLLCLPTSLS). 64–91 (DYIVIGGGTAGCPLAATLSQNFSVLVLE) is a binding site for FAD. Residue H529 is the Proton acceptor of the active site.

Belongs to the GMC oxidoreductase family. Requires FAD as cofactor. In terms of tissue distribution, expressed in roots, leaves, stems, inflorescences and siliques. Found not only in epidermis but also in all sub-epidermal cell layers.

Probable FAD-dependent enzyme. Involved in regulating post-genital organ fusion. Required to limit cellular interactions between contacting epidermal cells during floral development. This chain is Protein HOTHEAD (HTH), found in Arabidopsis thaliana (Mouse-ear cress).